The chain runs to 247 residues: ATP synthase subunit a, chloroplastic (247 aa).

The next 5 membrane-spanning stretches (helical) occupy residues 38–58, 95–115, 133–153, 199–219, and 220–240; these read QVLI…IIAV, VPFI…GALL, DINT…YAGL, LVVV…VMFL, and GLFT…AYIG.

The protein belongs to the ATPase A chain family. In terms of assembly, F-type ATPases have 2 components, CF(1) - the catalytic core - and CF(0) - the membrane proton channel. CF(1) has five subunits: alpha(3), beta(3), gamma(1), delta(1), epsilon(1). CF(0) has four main subunits: a, b, b' and c.

The protein localises to the plastid. The protein resides in the chloroplast thylakoid membrane. Functionally, key component of the proton channel; it plays a direct role in the translocation of protons across the membrane. The protein is ATP synthase subunit a, chloroplastic of Phalaenopsis aphrodite subsp. formosana (Moth orchid).